Reading from the N-terminus, the 216-residue chain is Pyridoxine/pyridoxamine 5'-phosphate oxidase (216 aa).

Residues 64 to 69 (RVVLLK), 79 to 80 (FT), K85, K86, and Q108 each bind FMN. K69 is a substrate binding site. The substrate site is built by Y126, R130, and S134. Residues 143–144 (QS) and W188 each bind FMN. 194–196 (RKH) contacts substrate. Position 198 (R198) interacts with FMN.

It belongs to the pyridoxamine 5'-phosphate oxidase family. Homodimer. FMN serves as cofactor.

It catalyses the reaction pyridoxamine 5'-phosphate + O2 + H2O = pyridoxal 5'-phosphate + H2O2 + NH4(+). The catalysed reaction is pyridoxine 5'-phosphate + O2 = pyridoxal 5'-phosphate + H2O2. It functions in the pathway cofactor metabolism; pyridoxal 5'-phosphate salvage; pyridoxal 5'-phosphate from pyridoxamine 5'-phosphate: step 1/1. It participates in cofactor metabolism; pyridoxal 5'-phosphate salvage; pyridoxal 5'-phosphate from pyridoxine 5'-phosphate: step 1/1. Functionally, catalyzes the oxidation of either pyridoxine 5'-phosphate (PNP) or pyridoxamine 5'-phosphate (PMP) into pyridoxal 5'-phosphate (PLP). The polypeptide is Pyridoxine/pyridoxamine 5'-phosphate oxidase (Wolbachia pipientis wMel).